Reading from the N-terminus, the 255-residue chain is Hydroxyacylglutathione hydrolase (255 aa).

Zn(2+) is bound by residues His56, His58, Asp60, His61, His114, Asp133, and His171.

It belongs to the metallo-beta-lactamase superfamily. Glyoxalase II family. Monomer. Zn(2+) serves as cofactor.

It carries out the reaction an S-(2-hydroxyacyl)glutathione + H2O = a 2-hydroxy carboxylate + glutathione + H(+). It participates in secondary metabolite metabolism; methylglyoxal degradation; (R)-lactate from methylglyoxal: step 2/2. Thiolesterase that catalyzes the hydrolysis of S-D-lactoyl-glutathione to form glutathione and D-lactic acid. The sequence is that of Hydroxyacylglutathione hydrolase from Nitrobacter hamburgensis (strain DSM 10229 / NCIMB 13809 / X14).